The chain runs to 295 residues: Pyridoxal 5'-phosphate synthase subunit PdxS (295 aa).

Residue Asp-25 participates in D-ribose 5-phosphate binding. Residue Lys-82 is the Schiff-base intermediate with D-ribose 5-phosphate of the active site. Gly-154 serves as a coordination point for D-ribose 5-phosphate. Arg-166 lines the D-glyceraldehyde 3-phosphate pocket. D-ribose 5-phosphate is bound by residues Gly-215 and 236-237 (GS).

It belongs to the PdxS/SNZ family. In terms of assembly, in the presence of PdxT, forms a dodecamer of heterodimers.

It catalyses the reaction aldehydo-D-ribose 5-phosphate + D-glyceraldehyde 3-phosphate + L-glutamine = pyridoxal 5'-phosphate + L-glutamate + phosphate + 3 H2O + H(+). It participates in cofactor biosynthesis; pyridoxal 5'-phosphate biosynthesis. Its function is as follows. Catalyzes the formation of pyridoxal 5'-phosphate from ribose 5-phosphate (RBP), glyceraldehyde 3-phosphate (G3P) and ammonia. The ammonia is provided by the PdxT subunit. Can also use ribulose 5-phosphate and dihydroxyacetone phosphate as substrates, resulting from enzyme-catalyzed isomerization of RBP and G3P, respectively. The protein is Pyridoxal 5'-phosphate synthase subunit PdxS of Staphylococcus saprophyticus subsp. saprophyticus (strain ATCC 15305 / DSM 20229 / NCIMB 8711 / NCTC 7292 / S-41).